The following is a 292-amino-acid chain: 4-hydroxy-tetrahydrodipicolinate synthase (292 aa).

Residue Thr45 coordinates pyruvate. Catalysis depends on Tyr133, which acts as the Proton donor/acceptor. Catalysis depends on Lys161, which acts as the Schiff-base intermediate with substrate. Pyruvate is bound at residue Ile203.

It belongs to the DapA family. As to quaternary structure, homotetramer; dimer of dimers.

The protein localises to the cytoplasm. It carries out the reaction L-aspartate 4-semialdehyde + pyruvate = (2S,4S)-4-hydroxy-2,3,4,5-tetrahydrodipicolinate + H2O + H(+). It functions in the pathway amino-acid biosynthesis; L-lysine biosynthesis via DAP pathway; (S)-tetrahydrodipicolinate from L-aspartate: step 3/4. Its function is as follows. Catalyzes the condensation of (S)-aspartate-beta-semialdehyde [(S)-ASA] and pyruvate to 4-hydroxy-tetrahydrodipicolinate (HTPA). This Cronobacter sakazakii (strain ATCC BAA-894) (Enterobacter sakazakii) protein is 4-hydroxy-tetrahydrodipicolinate synthase.